Reading from the N-terminus, the 463-residue chain is Nucleobindin-1 (463 aa).

Positions 1 to 26 are cleaved as a signal peptide; sequence MPPSGPQGTLLLLPLLLLLLLRAVLA. The residue at position 86 (S86) is a Phosphoserine. T148 bears the Phosphothreonine mark. The stretch at 150–218 forms a coiled coil; sequence EARDLELLIQ…QQRRHREHPK (69 aa). Residues 172–218 mediate DNA binding; the sequence is HHEEFKRYEMLKEHERRRYLESLGEEQRKEAERRLEEQQRRHREHPK. The segment covering 193-210 has biased composition (basic and acidic residues); the sequence is SLGEEQRKEAERRLEEQQ. The tract at residues 193–221 is disordered; sequence SLGEEQRKEAERRLEEQQRRHREHPKVNV. The segment at 228–321 is binds to GNAI2 and GNAI3; the sequence is LKEVWEELDG…VTLGEFLAST (94 aa). 2 EF-hand domains span residues 240 to 275 and 292 to 327; these read PNRFNPKTFFILHDINSDGVLDEQELEALFTKELEK and ERLRMREHVMKNVDTNQDRLVTLGEFLASTQRKEFG. Residues D253, N255, D257, E264, D305, N307, D309, and E316 each contribute to the Ca(2+) site. The GBA motif lies at 303 to 333; the sequence is NVDTNQDRLVTLGEFLASTQRKEFGDTGEGW. A coiled-coil region spans residues 341 to 409; it reads AYTEEELRRF…KQQQQQQQQQ (69 aa). Positions 368 to 463 are disordered; sequence LSQETEALGR…LPEVEVPQHL (96 aa). Residue S369 is modified to Phosphoserine. The segment covering 439-463 has biased composition (basic and acidic residues); it reads DQKEVDTSEKKLLERLPEVEVPQHL.

The protein belongs to the nucleobindin family. As to quaternary structure, interacts (via GBA motif) with guanine nucleotide-binding protein G(i) alpha subunits GNAI1, GNAI2 and GNAI3 with higher affinity for GNAI1 and GNAI3 than for GNAI2. Preferentially interacts with inactive rather than active GNAI3. Interaction with GNAI3 is inhibited when NUCB1 binds calcium, probably due to a conformational change which renders the GBA motif inaccessible.

It is found in the golgi apparatus. Its subcellular location is the cis-Golgi network membrane. The protein localises to the cytoplasm. The protein resides in the secreted. Major calcium-binding protein of the Golgi which may have a role in calcium homeostasis. Acts as a non-receptor guanine nucleotide exchange factor which binds to and activates alpha subunits of guanine nucleotide-binding proteins (G proteins). The chain is Nucleobindin-1 (NUCB1) from Pongo abelii (Sumatran orangutan).